A 245-amino-acid chain; its full sequence is Thiopurine S-methyltransferase (245 aa).

29 to 40 (WQEKWVSRRIGF) serves as a coordination point for S-adenosyl-L-methionine. Phenylalanine 40 contributes to the substrate binding site. Lysine 58 is modified (N6-acetyllysine). Leucine 69, glutamate 90, and arginine 152 together coordinate S-adenosyl-L-methionine.

It belongs to the class I-like SAM-binding methyltransferase superfamily. TPMT family. Monomer.

It localises to the cytoplasm. The enzyme catalyses S-adenosyl-L-methionine + a thiopurine = S-adenosyl-L-homocysteine + a thiopurine S-methylether.. The protein is Thiopurine S-methyltransferase (TPMT) of Canis lupus familiaris (Dog).